The sequence spans 2359 residues: Neuron navigator 3 (2359 aa).

Residues 77–184 (IEDSKIYTDW…LFFSLSRYKQ (108 aa)) form the Calponin-homology (CH) domain. Composition is skewed to polar residues over residues 204–226 (THTA…SSLT), 233–243 (SKHSGIATSQK), 257–279 (ASSS…FNSI), and 300–317 (QPSS…TSGQ). Disordered stretches follow at residues 204-623 (THTA…QQQH) and 641-660 (ENEG…TKMD). The span at 318-329 (PPASAIPSPSAS) shows a compositional bias: low complexity. Over residues 335–352 (KSMNVKHSATSTMLTVKQ) the composition is skewed to polar residues. Composition is skewed to low complexity over residues 353–363 (PSPATSPTPSS) and 427–439 (NSGL…TNSS). Residues 465–491 (PKEKEEKTRDKNKACAEKSGKEEKDQV) show a composition bias toward basic and acidic residues. The span at 522-536 (IPSSSGIPKPGSKVP) shows a compositional bias: low complexity. The segment covering 592–623 (ASPSSSCVMQVTHSSGQSPGNGAVQLPQQQQH) has biased composition (polar residues). A coiled-coil region spans residues 680-708 (EARRMRTVKNIADLRQNLEETMSSLRGTQ). Disordered stretches follow at residues 878-1315 (ADSW…SPLF), 1413-1472 (LSES…AMSS), 1653-1758 (GALN…KPSQ), and 1829-1855 (ETGN…SRQS). Composition is skewed to low complexity over residues 883–896 (DSSS…DTLD) and 904–916 (NTTS…SNIT). Over residues 917–926 (VPSRKNTQLK) the composition is skewed to polar residues. The span at 943–960 (EELKKAEGDCDSHGDGAA) shows a compositional bias: basic and acidic residues. 2 stretches are compositionally biased toward polar residues: residues 978–989 (QKASLSVSQTGS) and 997–1013 (QGGT…TSAL). Basic and acidic residues predominate over residues 1017 to 1029 (GKTDDAKASEKGK). Composition is skewed to low complexity over residues 1077–1095 (GAST…GSAT) and 1160–1173 (SSTS…SSKS). A compositionally biased stretch (polar residues) spans 1190-1199 (GRSSPVTVNQ). Composition is skewed to low complexity over residues 1209–1229 (VSDS…TSAS), 1256–1266 (GAKAGGKSASA), and 1274–1285 (SSSVVLSPSTSL). Positions 1299 to 1308 (GSMGSAGGLS) are enriched in gly residues. The span at 1439-1448 (NQEEGKEWLR) shows a compositional bias: basic and acidic residues. The segment covering 1449–1461 (SHSTGGLQDTGNQ) has biased composition (polar residues). A phosphoserine mark is found at serine 1462 and serine 1466. Residues 1462–1472 (SPLVSPSAMSS) show a composition bias toward low complexity. Residues 1565–1656 (AEEKAHSEQI…AQAAIQGALN (92 aa)) adopt a coiled-coil conformation. Composition is skewed to low complexity over residues 1675-1692 (SVSS…GSGN) and 1749-1758 (SGSSSMKPSQ). Residues 1768–1835 (EAEAEIILQL…LKAETGNTAK (68 aa)) adopt a coiled-coil conformation. Residues 1841–1855 (SDSSSTASSSSSRQS) show a composition bias toward low complexity.

It belongs to the Nav/unc-53 family. As to expression, present in neurons from central and peripheral nervous systems (at protein level). Highly expressed in brain cortex, midbrain, cerebellum and hippocampus.

The protein resides in the nucleus outer membrane. Plays a role in cell migration. May be involved in neuron regeneration. May regulate IL2 production by T-cells. The polypeptide is Neuron navigator 3 (Nav3) (Mus musculus (Mouse)).